Reading from the N-terminus, the 93-residue chain is Acylphosphatase (93 aa).

An Acylphosphatase-like domain is found at 6-93 (RAHILVSGEV…GDLGPFSVRH (88 aa)). Active-site residues include arginine 21 and asparagine 39.

It belongs to the acylphosphatase family.

The catalysed reaction is an acyl phosphate + H2O = a carboxylate + phosphate + H(+). This Anaeromyxobacter sp. (strain Fw109-5) protein is Acylphosphatase (acyP).